The chain runs to 438 residues: UDP-N-acetylmuramoylalanine--D-glutamate ligase (438 aa).

105-111 (GSNGKTT) contributes to the ATP binding site.

Belongs to the MurCDEF family.

The protein localises to the cytoplasm. The catalysed reaction is UDP-N-acetyl-alpha-D-muramoyl-L-alanine + D-glutamate + ATP = UDP-N-acetyl-alpha-D-muramoyl-L-alanyl-D-glutamate + ADP + phosphate + H(+). It functions in the pathway cell wall biogenesis; peptidoglycan biosynthesis. Functionally, cell wall formation. Catalyzes the addition of glutamate to the nucleotide precursor UDP-N-acetylmuramoyl-L-alanine (UMA). This chain is UDP-N-acetylmuramoylalanine--D-glutamate ligase, found in Oenococcus oeni (strain ATCC BAA-331 / PSU-1).